Reading from the N-terminus, the 267-residue chain is Tryptophan synthase alpha chain (267 aa).

Catalysis depends on proton acceptor residues Glu-39 and Asp-50.

This sequence belongs to the TrpA family. In terms of assembly, tetramer of two alpha and two beta chains.

It carries out the reaction (1S,2R)-1-C-(indol-3-yl)glycerol 3-phosphate + L-serine = D-glyceraldehyde 3-phosphate + L-tryptophan + H2O. It functions in the pathway amino-acid biosynthesis; L-tryptophan biosynthesis; L-tryptophan from chorismate: step 5/5. Its function is as follows. The alpha subunit is responsible for the aldol cleavage of indoleglycerol phosphate to indole and glyceraldehyde 3-phosphate. In Helicobacter hepaticus (strain ATCC 51449 / 3B1), this protein is Tryptophan synthase alpha chain.